Consider the following 612-residue polypeptide: uncharacterized protein (612 aa).

Residues 39 to 100 (ERDHNLWEIE…KNISVKDLDE (62 aa)) adopt a coiled-coil conformation. The segment at 219-241 (PLSSGESLPKKEEEVTKSPSFTL) is disordered. 7 WD repeats span residues 286–325 (TSTQ…NDNS), 337–376 (GHEG…TSDS), 389–432 (GHED…FKIR), 434–470 (DSKQ…LVSQ), 483–523 (AVKD…LLAE), 526–565 (ISKV…STLE), and 574–612 (EEIT…KYLP).

It is found in the cytoplasm. This is an uncharacterized protein from Schizosaccharomyces pombe (strain 972 / ATCC 24843) (Fission yeast).